Consider the following 159-residue polypeptide: 2-C-methyl-D-erythritol 2,4-cyclodiphosphate synthase (159 aa).

Residues Asp-10 and His-12 each coordinate a divalent metal cation. 4-CDP-2-C-methyl-D-erythritol 2-phosphate contacts are provided by residues 10–12 and 37–38; these read DVH and HS. His-45 is a binding site for a divalent metal cation. 4-CDP-2-C-methyl-D-erythritol 2-phosphate is bound by residues 59 to 61, 64 to 68, 103 to 109, 135 to 138, Phe-142, and Arg-145; these read DIG, FPDTD, AQAPKML, and TTTE.

This sequence belongs to the IspF family. As to quaternary structure, homotrimer. Requires a divalent metal cation as cofactor.

The catalysed reaction is 4-CDP-2-C-methyl-D-erythritol 2-phosphate = 2-C-methyl-D-erythritol 2,4-cyclic diphosphate + CMP. Its pathway is isoprenoid biosynthesis; isopentenyl diphosphate biosynthesis via DXP pathway; isopentenyl diphosphate from 1-deoxy-D-xylulose 5-phosphate: step 4/6. Functionally, involved in the biosynthesis of isopentenyl diphosphate (IPP) and dimethylallyl diphosphate (DMAPP), two major building blocks of isoprenoid compounds. Catalyzes the conversion of 4-diphosphocytidyl-2-C-methyl-D-erythritol 2-phosphate (CDP-ME2P) to 2-C-methyl-D-erythritol 2,4-cyclodiphosphate (ME-CPP) with a corresponding release of cytidine 5-monophosphate (CMP). The polypeptide is 2-C-methyl-D-erythritol 2,4-cyclodiphosphate synthase (Francisella tularensis subsp. novicida (strain U112)).